A 373-amino-acid polypeptide reads, in one-letter code: Chaperone protein DnaJ (373 aa).

Residues 5–70 (DYYEVLGVHR…QQRVIYDQYG (66 aa)) enclose the J domain. The CR-type zinc finger occupies 136-214 (GLETKIQIPR…CHGSGRVRGK (79 aa)). 8 residues coordinate Zn(2+): Cys149, Cys152, Cys166, Cys169, Cys188, Cys191, Cys202, and Cys205. CXXCXGXG motif repeat units lie at residues 149–156 (CGTCDGIG), 166–173 (CPTCQGAG), 188–195 (CPECNGEG), and 202–209 (CEECHGSG).

The protein belongs to the DnaJ family. Homodimer. Requires Zn(2+) as cofactor.

It is found in the cytoplasm. Its function is as follows. Participates actively in the response to hyperosmotic and heat shock by preventing the aggregation of stress-denatured proteins and by disaggregating proteins, also in an autonomous, DnaK-independent fashion. Unfolded proteins bind initially to DnaJ; upon interaction with the DnaJ-bound protein, DnaK hydrolyzes its bound ATP, resulting in the formation of a stable complex. GrpE releases ADP from DnaK; ATP binding to DnaK triggers the release of the substrate protein, thus completing the reaction cycle. Several rounds of ATP-dependent interactions between DnaJ, DnaK and GrpE are required for fully efficient folding. Also involved, together with DnaK and GrpE, in the DNA replication of plasmids through activation of initiation proteins. In Syntrophotalea carbinolica (strain DSM 2380 / NBRC 103641 / GraBd1) (Pelobacter carbinolicus), this protein is Chaperone protein DnaJ.